A 434-amino-acid chain; its full sequence is Trigger factor (434 aa).

Positions 161–246 (EDRVVIDFTG…VKQVQAPVLP (86 aa)) constitute a PPIase FKBP-type domain.

The protein belongs to the FKBP-type PPIase family. Tig subfamily.

It is found in the cytoplasm. It catalyses the reaction [protein]-peptidylproline (omega=180) = [protein]-peptidylproline (omega=0). In terms of biological role, involved in protein export. Acts as a chaperone by maintaining the newly synthesized protein in an open conformation. Functions as a peptidyl-prolyl cis-trans isomerase. The sequence is that of Trigger factor from Dechloromonas aromatica (strain RCB).